A 154-amino-acid polypeptide reads, in one-letter code: Interleukin-2 (154 aa).

A signal peptide spans 1–20 (MYRMQLLSCIALSLALVTNS). An O-linked (GalNAc...) threonine glycan is attached at T23. A disulfide bridge connects residues C78 and C126.

This sequence belongs to the IL-2 family.

It localises to the secreted. Functionally, cytokine produced by activated CD4-positive helper T-cells and to a lesser extend activated CD8-positive T-cells and natural killer (NK) cells that plays pivotal roles in the immune response and tolerance. Binds to a receptor complex composed of either the high-affinity trimeric IL-2R (IL2RA/CD25, IL2RB/CD122 and IL2RG/CD132) or the low-affinity dimeric IL-2R (IL2RB and IL2RG). Interaction with the receptor leads to oligomerization and conformation changes in the IL-2R subunits resulting in downstream signaling starting with phosphorylation of JAK1 and JAK3. In turn, JAK1 and JAK3 phosphorylate the receptor to form a docking site leading to the phosphorylation of several substrates including STAT5. This process leads to activation of several pathways including STAT, phosphoinositide-3-kinase/PI3K and mitogen-activated protein kinase/MAPK pathways. Functions as a T-cell growth factor and can increase NK-cell cytolytic activity as well. Promotes strong proliferation of activated B-cells and subsequently immunoglobulin production. Plays a pivotal role in regulating the adaptive immune system by controlling the survival and proliferation of regulatory T-cells, which are required for the maintenance of immune tolerance. Moreover, participates in the differentiation and homeostasis of effector T-cell subsets, including Th1, Th2, Th17 as well as memory CD8-positive T-cells. The protein is Interleukin-2 (IL2) of Papio anubis (Olive baboon).